The following is a 782-amino-acid chain: Zinc finger protein 786 (782 aa).

The region spanning 9 to 80 is the KRAB domain; sequence LTFEDVAIYF…WRESQKSGNI (72 aa). The interval 141-164 is disordered; sequence PQRHDARAPPPLACGPSESTLKEG. Residues 192-209 form a C2H2-type 1; degenerate zinc finger; it reads CGESCWENNHLVMHQRGH. Residues 240 to 262 form a C2H2-type 2 zinc finger; sequence FRCGVCGKSFRRKLCLLRHLAAH. A disordered region spans residues 285–364; the sequence is SHRLPQQGEK…EGDTEALQHG (80 aa). The C2H2-type 3; degenerate zinc finger occupies 369–391; it reads CSCSECGERSPMSARLASPCRAH. 3 consecutive C2H2-type zinc fingers follow at residues 397–419, 425–447, and 453–475; these read FQCAHCTKRFRLRRLLQVHQHAH, FSCRKCGKGFAKQCKLTEHIRVH, and FRCAKCGRNFRQRGQLLRHQRLH. The C2H2-type 7; degenerate zinc-finger motif lies at 481 to 503; that stretch reads FQCPECGLSFRLESMLRAHRLRH. 9 consecutive C2H2-type zinc fingers follow at residues 509–531, 537–559, 565–587, 593–615, 621–643, 649–670, 676–698, 704–726, and 732–754; these read FSCSECGRGFTHQCKLREHLRVH, FQCLKCDKRFRLKGILKAHQHTH, FSCGECGKGFTRQSKLTEHLRVH, FQCPECNRSFRLKGQLLSHQRLH, FQCPECDKRYRVKADMKAHQLLH, FSCECGKGFVKHSKLIEHIRTH, FQCPKCDKSFRLKAQLLSHQGLH, FHCPECDKNFRERGHMLRHQRIH, and FACGDCGKGFIYKSKLAEHIRVH.

The protein belongs to the krueppel C2H2-type zinc-finger protein family.

The protein localises to the nucleus. May be involved in transcriptional regulation. The protein is Zinc finger protein 786 (ZNF786) of Homo sapiens (Human).